Consider the following 233-residue polypeptide: EEF1A lysine methyltransferase 2 (233 aa).

Belongs to the class I-like SAM-binding methyltransferase superfamily. EFM4 family.

Its subcellular location is the cytoplasm. It localises to the nucleus. The catalysed reaction is L-lysyl-[protein] + 3 S-adenosyl-L-methionine = N(6),N(6),N(6)-trimethyl-L-lysyl-[protein] + 3 S-adenosyl-L-homocysteine + 3 H(+). Its function is as follows. Protein-lysine methyltransferase that selectively catalyzes the trimethylation of EEF1A at 'Lys-318'. In Danio rerio (Zebrafish), this protein is EEF1A lysine methyltransferase 2.